A 217-amino-acid polypeptide reads, in one-letter code: Ribonuclease HII 2 (217 aa).

Residues G28–P217 enclose the RNase H type-2 domain. 3 residues coordinate a divalent metal cation: D34, E35, and D126.

This sequence belongs to the RNase HII family. Mn(2+) serves as cofactor. The cofactor is Mg(2+).

Its subcellular location is the cytoplasm. The catalysed reaction is Endonucleolytic cleavage to 5'-phosphomonoester.. Its function is as follows. Endonuclease that specifically degrades the RNA of RNA-DNA hybrids. The chain is Ribonuclease HII 2 from Methylibium petroleiphilum (strain ATCC BAA-1232 / LMG 22953 / PM1).